Reading from the N-terminus, the 148-residue chain is Truncated transcription factor CAULIFLOWER D (148 aa).

The 61-residue stretch at 1 to 61 (MGRGRVEMKR…GKLFEYSSES (61 aa)) folds into the MADS-box domain. Residues 90–148 (QTNWSMEYSRLKAKIELWERNQRHYLGEDLESISIKELQNLEQQLDTSLKHIRSRKVCK) form the K-box; partial domain.

In terms of assembly, homodimer capable of binding to CArG-box sequences.

It localises to the nucleus. Functionally, probable transcription factor that promotes early floral meristem identity in synergy with APETALA1, FRUITFULL and LEAFY. Is required subsequently for the transition of an inflorescence meristem into a floral meristem. Seems to be partially redundant to the function of APETALA1. In Brassica oleracea var. botrytis (Cauliflower), this protein is Truncated transcription factor CAULIFLOWER D (CAL-D).